Consider the following 424-residue polypeptide: STAM-binding protein (424 aa).

The segment at 1–127 is interaction with CHMP3; it reads MSDHGDVSLP…YTEYNEEKKK (127 aa). S2 and S48 each carry phosphoserine. Positions 227 to 231 are interaction with STAM; sequence PAKPP. 3 positions are modified to phosphoserine: S243, S245, and S247. One can recognise an MPN domain in the interval 257–388; sequence VVVPGRLCPQ…LTDHGLEEIS (132 aa). Residues H335, H337, D348, H350, C390, H396, and H398 each contribute to the Zn(2+) site. The JAMM motif motif lies at 335 to 348; sequence HTHPTQTAFLSSVD.

It belongs to the peptidase M67C family. As to quaternary structure, interacts with STAM. Interacts with SMAD6 and SMAD7. Interacts with CHMP3; the interaction appears to relieve the autoinhibition of CHMP3. Interacts with SMURF2 and RNF11; this interaction promotes ubiquitination. Requires Zn(2+) as cofactor. Post-translationally, phosphorylated after BMP type I receptor activation. Ubiquitinated by SMURF2 in the presence of RNF11. As to expression, ubiquitously expressed.

Its subcellular location is the nucleus. The protein resides in the membrane. It localises to the cytoplasm. It is found in the early endosome. Its activity is regulated as follows. Inhibited by N-ethylmaleimide. Strongly and specifically inhibited by ubiquitin variants UbV(SP.2) and UbV(SP.3). Also inhibited by UbV(SP.1); an ubiquitin variant that also inhibits STAMBPL1. Functionally, zinc metalloprotease that specifically cleaves 'Lys-63'-linked polyubiquitin chains. Does not cleave 'Lys-48'-linked polyubiquitin chains. Plays a role in signal transduction for cell growth and MYC induction mediated by IL-2 and GM-CSF. Potentiates BMP (bone morphogenetic protein) signaling by antagonizing the inhibitory action of SMAD6 and SMAD7. Has a key role in regulation of cell surface receptor-mediated endocytosis and ubiquitin-dependent sorting of receptors to lysosomes. Endosomal localization of STAMBP is required for efficient EGFR degradation but not for its internalization. Involved in the negative regulation of PI3K-AKT-mTOR and RAS-MAP signaling pathways. The protein is STAM-binding protein (STAMBP) of Homo sapiens (Human).